A 98-amino-acid chain; its full sequence is Ferredoxin-3 (98 aa).

4Fe-4S ferredoxin-type domains lie at 18 to 47 and 66 to 95; these read FVEA…LQAL and VMSI…HSPL. 8 residues coordinate [4Fe-4S] cluster: cysteine 27, cysteine 30, cysteine 33, cysteine 37, cysteine 75, cysteine 78, cysteine 81, and cysteine 85.

As to quaternary structure, homodimer. The cofactor is [4Fe-4S] cluster.

Functionally, ferredoxins are iron-sulfur proteins that transfer electrons in a wide variety of metabolic reactions. This chain is Ferredoxin-3 (fdxB), found in Trichormus variabilis (strain ATCC 29413 / PCC 7937) (Anabaena variabilis).